A 94-amino-acid chain; its full sequence is Selenoprotein K (94 aa).

A helical transmembrane segment spans residues 20-42 (VSFLTDFFWGIAEFVVFFFKTLL). Residues 46–94 (VKKRRGYGSSSDSRYDDGRGPPGNPPRRMGRISHLRGPSPPPMAGGUGR) form a disordered region. Position 92 (selenocysteine 92) is a non-standard amino acid, selenocysteine.

The protein belongs to the selenoprotein K family. As to quaternary structure, interacts with DERL1, DERL2, DERL3 and SELENOS. The SELENOK-SELENOS complex interacts with VCP. Interacts with ZDHHC6. Cleaved by CAPN2/m-calpain in resting macrophages but not in activated macrophages. Macrophage activation up-regulates expression of the calpain inhibitor CAST/calpastatin, resulting in inhibition of CAPN2 activity. Post-translationally, truncated SELENOK proteins produced by failed UGA/Sec decoding are ubiquitinated by the CRL2(KLHDC2) complex, which recognizes the diglycine (Gly-Gly) at the C-terminus of truncated SELENOK proteins. In terms of tissue distribution, high expression in spleen and intestine (at protein level). Expressed in a range of immune cells including T and B-cells and also in myeloid cells including macrophages, neutrophils and dendritic cells (at protein level).

The protein resides in the endoplasmic reticulum membrane. It is found in the cell membrane. Functionally, required for Ca(2+) flux in immune cells and plays a role in T-cell proliferation and in T-cell and neutrophil migration. Involved in endoplasmic reticulum-associated degradation (ERAD) of soluble glycosylated proteins. Required for palmitoylation and cell surface expression of CD36 and involved in macrophage uptake of low-density lipoprotein and in foam cell formation. Together with ZDHHC6, required for palmitoylation of ITPR1 in immune cells, leading to regulate ITPR1 stability and function. Plays a role in protection of cells from ER stress-induced apoptosis. Protects cells from oxidative stress when overexpressed in cardiomyocytes. The sequence is that of Selenoprotein K from Mus musculus (Mouse).